The primary structure comprises 780 residues: Exocyst complex component 3-like protein (780 aa).

The protein belongs to the SEC6 family.

The protein resides in the cytoplasmic vesicle. The protein localises to the secretory vesicle. Its function is as follows. As part of the exocyst, may play a role in regulated exocytosis. This is Exocyst complex component 3-like protein (exoc3l1) from Danio rerio (Zebrafish).